Consider the following 286-residue polypeptide: Aquaporin PIP2-4 (286 aa).

Transmembrane regions (helical) follow at residues 40–60 and 77–97; these read ALIA…ATVI and CGGV…FILV. The NPA 1 motif lies at 109 to 111; sequence NPA. 3 helical membrane-spanning segments follow: residues 128 to 148, 170 to 190, and 204 to 224; these read LLYM…VKGF, GTGL…VFSA, and VLAP…TIPI. The short motif at 230-232 is the NPA 2 element; the sequence is NPA. Residues 252–272 form a helical membrane-spanning segment; it reads IFWVGPFIGAAIAALYHQVIL.

This sequence belongs to the MIP/aquaporin (TC 1.A.8) family. PIP (TC 1.A.8.11) subfamily. In terms of tissue distribution, expressed in roots.

Its subcellular location is the cell membrane. Its function is as follows. Water channel required to facilitate the transport of water across cell membrane. May play a role in root water uptake. This is Aquaporin PIP2-4 (PIP2-4) from Oryza sativa subsp. japonica (Rice).